The chain runs to 246 residues: Neurotrophic factor BDNF precursor form (246 aa).

The N-terminal stretch at 1–18 is a signal peptide; that stretch reads MTILFLTMVISYLSCMKA. The propeptide occupies 19-127; sequence TPMKEVSIRG…AANMSMRVRR (109 aa). Asn120 carries N-linked (GlcNAc...) asparagine glycosylation. Intrachain disulfides connect Cys140–Cys207, Cys185–Cys236, and Cys195–Cys238.

Belongs to the NGF-beta family.

It is found in the secreted. Its function is as follows. Promotes the survival of neuronal populations that are all located either in the central nervous system or directly connected to it. The polypeptide is Neurotrophic factor BDNF precursor form (BDNF) (Ptyas major (Chinese green snake)).